A 317-amino-acid chain; its full sequence is Prenyl transferase paxC (317 aa).

Residues K53 and H86 each contribute to the substrate site. Residues D93 and D97 each coordinate Mg(2+). Positions 102, 186, 187, 216, 223, and 233 each coordinate substrate.

The protein belongs to the FPP/GGPP synthase family.

It participates in secondary metabolite biosynthesis. Its function is as follows. Prenyl transferase; part of the gene cluster that mediates the biosynthesis of paxalline, a mycotoxin that acts as an inhibitor of mammalian maxi-K channels. PaxG, the geranylgeranyl diphosphate (GGPP) synthase is proposed to catalyze the first step in paxilline biosynthesis. Condensation of indole-3-glycerol phosphate with GGPP by paxC then forms 3-geranylgeranylindole (3-GGI), followed by epoxidation and cyclization of this intermediate (by paxM and paxB) to form paspaline. Paspaline is subsequently converted to 13-desoxypaxilline by paxP, the latter being then converted to paxilline by paxQ. Finally paxilline can be mono- and di-prenylated by paxD. The sequence is that of Prenyl transferase paxC from Penicillium paxilli.